Reading from the N-terminus, the 362-residue chain is Endolytic peptidoglycan transglycosylase RlpA (362 aa).

The N-terminal stretch at 1-17 (MRKQWLGICIAAGMLAA) is a signal peptide. A lipid anchor (N-palmitoyl cysteine) is attached at cysteine 18. Cysteine 18 carries the S-diacylglycerol cysteine lipid modification. Positions 198-276 (PDLSGGAGTS…PSTTPATSPA (79 aa)) are disordered. Over residues 262 to 276 (PVVTAPSTTPATSPA) the composition is skewed to low complexity. The 77-residue stretch at 285–361 (QSASGNFMVQ…AQLQSFITTA (77 aa)) folds into the SPOR domain.

The protein belongs to the RlpA family.

The protein resides in the cell membrane. In terms of biological role, lytic transglycosylase with a strong preference for naked glycan strands that lack stem peptides. This chain is Endolytic peptidoglycan transglycosylase RlpA, found in Escherichia coli (strain K12).